Here is a 665-residue protein sequence, read N- to C-terminus: DNA mismatch repair protein MutL (665 aa).

This sequence belongs to the DNA mismatch repair MutL/HexB family.

Functionally, this protein is involved in the repair of mismatches in DNA. It is required for dam-dependent methyl-directed DNA mismatch repair. May act as a 'molecular matchmaker', a protein that promotes the formation of a stable complex between two or more DNA-binding proteins in an ATP-dependent manner without itself being part of a final effector complex. The chain is DNA mismatch repair protein MutL from Acidobacterium capsulatum (strain ATCC 51196 / DSM 11244 / BCRC 80197 / JCM 7670 / NBRC 15755 / NCIMB 13165 / 161).